A 340-amino-acid polypeptide reads, in one-letter code: MIRDEISVSTQTPRWRCIGSGADSKRLHYGRFALSPLRKGQASTIGIAMRRALLGEIEGTCITHAKLEKVTHEYSAIIGIEESVHDILINLKEIVLRSDPYGTREASICIVGPRNVTAQDIILPPSVRIIDATQHIASLTKSITFDIRLWIEKDRGYRIQSPKNYQDGIFPIDAVFMPVRNANYSIHSYGNGNDIQEILFLEIWTNGSLAPREALYRASRNLIDLFIPFLRAEEQNIDGMDNQNGSNMPSFSFSNISADMERMEEEVAFKHIFIDQSELPPRVYNCLGRVNIHTLSDLLNYSQEDLMRIGHFGKKSVEQVSEVLQKHFAVDLPKNKFQIH.

Residues 1–233 (MIRDEISVST…DLFIPFLRAE (233 aa)) form an alpha N-terminal domain (alpha-NTD) region. The interval 268 to 340 (AFKHIFIDQS…DLPKNKFQIH (73 aa)) is alpha C-terminal domain (alpha-CTD).

It belongs to the RNA polymerase alpha chain family. In terms of assembly, in plastids the minimal PEP RNA polymerase catalytic core is composed of four subunits: alpha, beta, beta', and beta''. When a (nuclear-encoded) sigma factor is associated with the core the holoenzyme is formed, which can initiate transcription.

It is found in the plastid. The protein resides in the chloroplast. The catalysed reaction is RNA(n) + a ribonucleoside 5'-triphosphate = RNA(n+1) + diphosphate. DNA-dependent RNA polymerase catalyzes the transcription of DNA into RNA using the four ribonucleoside triphosphates as substrates. This Cycas taitungensis (Prince sago) protein is DNA-directed RNA polymerase subunit alpha.